The chain runs to 81 residues: Photosystem I iron-sulfur center (81 aa).

4Fe-4S ferredoxin-type domains follow at residues 2 to 31 and 39 to 68; these read SHSV…MIPW and IASA…VRVY. Residues Cys11, Cys14, Cys17, Cys21, Cys48, Cys51, Cys54, and Cys58 each contribute to the [4Fe-4S] cluster site.

As to quaternary structure, the eukaryotic PSI reaction center is composed of at least 11 subunits. Requires [4Fe-4S] cluster as cofactor.

Its subcellular location is the plastid. The protein resides in the chloroplast thylakoid membrane. The catalysed reaction is reduced [plastocyanin] + hnu + oxidized [2Fe-2S]-[ferredoxin] = oxidized [plastocyanin] + reduced [2Fe-2S]-[ferredoxin]. Functionally, apoprotein for the two 4Fe-4S centers FA and FB of photosystem I (PSI); essential for photochemical activity. FB is the terminal electron acceptor of PSI, donating electrons to ferredoxin. The C-terminus interacts with PsaA/B/D and helps assemble the protein into the PSI complex. Required for binding of PsaD and PsaE to PSI. PSI is a plastocyanin-ferredoxin oxidoreductase, converting photonic excitation into a charge separation, which transfers an electron from the donor P700 chlorophyll pair to the spectroscopically characterized acceptors A0, A1, FX, FA and FB in turn. This is Photosystem I iron-sulfur center from Helianthus annuus (Common sunflower).